Reading from the N-terminus, the 299-residue chain is tRNA-cytidine(32) 2-sulfurtransferase (299 aa).

Residues 56 to 61 (SGGKDS) carry the PP-loop motif motif. 3 residues coordinate [4Fe-4S] cluster: Cys131, Cys134, and Cys222.

Belongs to the TtcA family. Homodimer. Mg(2+) serves as cofactor. The cofactor is [4Fe-4S] cluster.

Its subcellular location is the cytoplasm. The enzyme catalyses cytidine(32) in tRNA + S-sulfanyl-L-cysteinyl-[cysteine desulfurase] + AH2 + ATP = 2-thiocytidine(32) in tRNA + L-cysteinyl-[cysteine desulfurase] + A + AMP + diphosphate + H(+). Its pathway is tRNA modification. Catalyzes the ATP-dependent 2-thiolation of cytidine in position 32 of tRNA, to form 2-thiocytidine (s(2)C32). The sulfur atoms are provided by the cysteine/cysteine desulfurase (IscS) system. This is tRNA-cytidine(32) 2-sulfurtransferase from Xylella fastidiosa (strain M23).